A 476-amino-acid polypeptide reads, in one-letter code: Glucan endo-1,3-beta-glucosidase 9 (476 aa).

A signal peptide spans 1-25 (MARRLFLLLLAVTAGLSLTGTTVRA). N-linked (GlcNAc...) asparagine glycans are attached at residues asparagine 88 and asparagine 101. The active-site Proton donor is glutamate 122. 7 N-linked (GlcNAc...) asparagine glycosylation sites follow: asparagine 184, asparagine 216, asparagine 277, asparagine 320, asparagine 342, asparagine 374, and asparagine 405. Cysteine 364 and cysteine 424 are joined by a disulfide. Serine 453 is lipidated: GPI-anchor amidated serine. The propeptide at 454-476 (SSQTPNFFQSWPLLLLFLLSGLF) is removed in mature form.

This sequence belongs to the glycosyl hydrolase 17 family. In terms of processing, contains two additional disulfide bonds.

The protein resides in the secreted. It localises to the cell wall. The protein localises to the cell membrane. It carries out the reaction Hydrolysis of (1-&gt;3)-beta-D-glucosidic linkages in (1-&gt;3)-beta-D-glucans.. In Arabidopsis thaliana (Mouse-ear cress), this protein is Glucan endo-1,3-beta-glucosidase 9.